Here is a 253-residue protein sequence, read N- to C-terminus: Adapter protein MecA (253 aa).

The protein belongs to the MecA family. As to quaternary structure, homodimer.

Enables the recognition and targeting of unfolded and aggregated proteins to the ClpC protease or to other proteins involved in proteolysis. The polypeptide is Adapter protein MecA (Streptococcus pyogenes serotype M18 (strain MGAS8232)).